The chain runs to 537 residues: Putative cysteine ligase BshC (537 aa).

Positions 417–457 (ASEQFLNELDQLEAQQKETYERLAAEVQGNEDNKNLVEKNN) form a coiled coil.

This sequence belongs to the BshC family.

In terms of biological role, involved in bacillithiol (BSH) biosynthesis. May catalyze the last step of the pathway, the addition of cysteine to glucosamine malate (GlcN-Mal) to generate BSH. The protein is Putative cysteine ligase BshC of Staphylococcus carnosus (strain TM300).